The chain runs to 238 residues: Thiamine import ATP-binding protein ThiQ (238 aa).

The ABC transporter domain occupies 2–230 (LALDKVRYEY…HPHPELAQFV (229 aa)). Residue 32–39 (GPSGAGKS) coordinates ATP.

Belongs to the ABC transporter superfamily. Thiamine importer (TC 3.A.1.19.1) family. In terms of assembly, the complex is composed of two ATP-binding proteins (ThiQ), two transmembrane proteins (ThiP) and a solute-binding protein (ThiB).

The protein resides in the cell inner membrane. It catalyses the reaction thiamine(out) + ATP + H2O = thiamine(in) + ADP + phosphate + H(+). Functionally, part of the ABC transporter complex ThiBPQ involved in thiamine import. Responsible for energy coupling to the transport system. The chain is Thiamine import ATP-binding protein ThiQ from Vibrio cholerae serotype O1 (strain ATCC 39315 / El Tor Inaba N16961).